A 29-amino-acid polypeptide reads, in one-letter code: Varv peptide D (29 aa).

Residues 1–29 (GLPICGETCVGGSCNTPGCSCSWPVCTRN) constitute a cross-link (cyclopeptide (Gly-Asn)). 3 cysteine pairs are disulfide-bonded: C5–C19, C9–C21, and C14–C26.

Post-translationally, this is a cyclic peptide.

Probably participates in a plant defense mechanism. This Viola arvensis (European field pansy) protein is Varv peptide D.